Consider the following 347-residue polypeptide: Phosphate acyltransferase (347 aa).

The protein belongs to the PlsX family. As to quaternary structure, homodimer. Probably interacts with PlsY.

The protein localises to the cytoplasm. The enzyme catalyses a fatty acyl-[ACP] + phosphate = an acyl phosphate + holo-[ACP]. It functions in the pathway lipid metabolism; phospholipid metabolism. Functionally, catalyzes the reversible formation of acyl-phosphate (acyl-PO(4)) from acyl-[acyl-carrier-protein] (acyl-ACP). This enzyme utilizes acyl-ACP as fatty acyl donor, but not acyl-CoA. In Lawsonia intracellularis (strain PHE/MN1-00), this protein is Phosphate acyltransferase.